The chain runs to 485 residues: UDP-N-acetylmuramate--L-alanine ligase (485 aa).

120–126 (GSHGKTT) lines the ATP pocket.

It belongs to the MurCDEF family.

The protein resides in the cytoplasm. It catalyses the reaction UDP-N-acetyl-alpha-D-muramate + L-alanine + ATP = UDP-N-acetyl-alpha-D-muramoyl-L-alanine + ADP + phosphate + H(+). It participates in cell wall biogenesis; peptidoglycan biosynthesis. In terms of biological role, cell wall formation. In Rickettsia conorii (strain ATCC VR-613 / Malish 7), this protein is UDP-N-acetylmuramate--L-alanine ligase.